The chain runs to 425 residues: ATP-dependent RNA helicase RhlB (425 aa).

Residues 9-37 (TRFADLALHPKIQQAISSAGFEYCTPIQA) carry the Q motif motif. The Helicase ATP-binding domain occupies 40 to 218 (LPVALSNRDV…YEHMNAPTKL (179 aa)). 53 to 60 (AQTGTGKT) serves as a coordination point for ATP. Positions 164–167 (DEAD) match the DEAD box motif. The Helicase C-terminal domain maps to 242-389 (KFPLLLTLIE…VTKYDGDALL (148 aa)). The tract at residues 391–425 (DLRRPRPIQRRRRHNSGGGKGKPRGRRSGPPRNAS) is disordered. The segment covering 395–419 (PRPIQRRRRHNSGGGKGKPRGRRSG) has biased composition (basic residues).

The protein belongs to the DEAD box helicase family. RhlB subfamily. Component of the RNA degradosome, which is a multiprotein complex involved in RNA processing and mRNA degradation.

The protein localises to the cytoplasm. It catalyses the reaction ATP + H2O = ADP + phosphate + H(+). DEAD-box RNA helicase involved in RNA degradation. Has RNA-dependent ATPase activity and unwinds double-stranded RNA. This chain is ATP-dependent RNA helicase RhlB, found in Idiomarina loihiensis (strain ATCC BAA-735 / DSM 15497 / L2-TR).